Reading from the N-terminus, the 1192-residue chain is ATP-dependent helicase/deoxyribonuclease subunit B (1192 aa).

Belongs to the helicase family. AddB/RexB type 2 subfamily. Heterodimer of AddA and RexB. It depends on Mg(2+) as a cofactor.

The heterodimer acts as both an ATP-dependent DNA helicase and an ATP-dependent, dual-direction single-stranded exonuclease. Recognizes the chi site generating a DNA molecule suitable for the initiation of homologous recombination. This subunit has 5' -&gt; 3' nuclease activity but not helicase activity. The polypeptide is ATP-dependent helicase/deoxyribonuclease subunit B (Pediococcus pentosaceus (strain ATCC 25745 / CCUG 21536 / LMG 10740 / 183-1w)).